Consider the following 132-residue polypeptide: Profilin (132 aa).

Belongs to the profilin family. In terms of assembly, occurs in many kinds of cells as a complex with monomeric actin in a 1:1 ratio.

Its subcellular location is the cytoplasm. The protein localises to the cytoskeleton. Binds to actin and affects the structure of the cytoskeleton. At high concentrations, profilin prevents the polymerization of actin, whereas it enhances it at low concentrations. By binding to PIP2, it inhibits the formation of IP3 and DG. This Naegleria pringsheimi (Amoeba) protein is Profilin.